The following is a 395-amino-acid chain: Flavohemoprotein (395 aa).

A Globin domain is found at methionine 1–serine 136. Histidine 85 is a binding site for heme b. Active-site charge relay system residues include tyrosine 95 and glutamate 135. Residues glycine 147–isoleucine 395 are reductase. Residues histidine 150–glutamate 255 enclose the FAD-binding FR-type domain. Residues tyrosine 188 and arginine 204 to serine 207 each bind FAD. Residue glycine 268 to proline 273 coordinates NADP(+). Cysteine 388 to proline 391 serves as a coordination point for FAD.

This sequence belongs to the globin family. Two-domain flavohemoproteins subfamily. The protein in the C-terminal section; belongs to the flavoprotein pyridine nucleotide cytochrome reductase family. Requires heme b as cofactor. It depends on FAD as a cofactor.

The protein resides in the cytoplasm. The catalysed reaction is 2 nitric oxide + NADPH + 2 O2 = 2 nitrate + NADP(+) + H(+). The enzyme catalyses 2 nitric oxide + NADH + 2 O2 = 2 nitrate + NAD(+) + H(+). Its function is as follows. Is involved in NO detoxification in an aerobic process, termed nitric oxide dioxygenase (NOD) reaction that utilizes O(2) and NAD(P)H to convert NO to nitrate, which protects the bacterium from various noxious nitrogen compounds. Therefore, plays a central role in the inducible response to nitrosative stress. The chain is Flavohemoprotein (hmp) from Dickeya dadantii (strain 3937) (Erwinia chrysanthemi (strain 3937)).